We begin with the raw amino-acid sequence, 420 residues long: Replication factor C large subunit (420 aa).

46 to 53 is a binding site for ATP; that stretch reads GVQGSGKT.

The protein belongs to the activator 1 small subunits family. RfcL subfamily. Heteromultimer composed of small subunits (RfcS) and large subunits (RfcL).

Functionally, part of the RFC clamp loader complex which loads the PCNA sliding clamp onto DNA. The sequence is that of Replication factor C large subunit from Thermoplasma volcanium (strain ATCC 51530 / DSM 4299 / JCM 9571 / NBRC 15438 / GSS1).